The primary structure comprises 254 residues: 4-hydroxy-tetrahydrodipicolinate reductase (254 aa).

Residues 8-13 (GGSGRV), 87-89 (GTT), and 111-114 (ATNM) contribute to the NAD(+) site. H143 (proton donor/acceptor) is an active-site residue. (S)-2,3,4,5-tetrahydrodipicolinate is bound at residue H144. Residue K147 is the Proton donor of the active site. (S)-2,3,4,5-tetrahydrodipicolinate is bound at residue 153–154 (GT).

Belongs to the DapB family.

Its subcellular location is the cytoplasm. It catalyses the reaction (S)-2,3,4,5-tetrahydrodipicolinate + NAD(+) + H2O = (2S,4S)-4-hydroxy-2,3,4,5-tetrahydrodipicolinate + NADH + H(+). The enzyme catalyses (S)-2,3,4,5-tetrahydrodipicolinate + NADP(+) + H2O = (2S,4S)-4-hydroxy-2,3,4,5-tetrahydrodipicolinate + NADPH + H(+). Its pathway is amino-acid biosynthesis; L-lysine biosynthesis via DAP pathway; (S)-tetrahydrodipicolinate from L-aspartate: step 4/4. In terms of biological role, catalyzes the conversion of 4-hydroxy-tetrahydrodipicolinate (HTPA) to tetrahydrodipicolinate. This is 4-hydroxy-tetrahydrodipicolinate reductase from Nitratiruptor sp. (strain SB155-2).